Consider the following 202-residue polypeptide: Holliday junction branch migration complex subunit RuvA (202 aa).

A domain I region spans residues 1–64; sequence MIGYLKGQIL…YDGTVLYGFL (64 aa). The segment at 65–146 is domain II; sequence TKEDKQLWAI…AVTIAGVPKI (82 aa). The flexible linker stretch occupies residues 147 to 155; that stretch reads KIEGEAPFM. The domain III stretch occupies residues 155-202; the sequence is MSEVMMALTALGYSPMEARKAIDQLYKTGLANDSVENIIRAALRILKK.

Belongs to the RuvA family. Homotetramer. Forms an RuvA(8)-RuvB(12)-Holliday junction (HJ) complex. HJ DNA is sandwiched between 2 RuvA tetramers; dsDNA enters through RuvA and exits via RuvB. An RuvB hexamer assembles on each DNA strand where it exits the tetramer. Each RuvB hexamer is contacted by two RuvA subunits (via domain III) on 2 adjacent RuvB subunits; this complex drives branch migration. In the full resolvosome a probable DNA-RuvA(4)-RuvB(12)-RuvC(2) complex forms which resolves the HJ.

It localises to the cytoplasm. The RuvA-RuvB-RuvC complex processes Holliday junction (HJ) DNA during genetic recombination and DNA repair, while the RuvA-RuvB complex plays an important role in the rescue of blocked DNA replication forks via replication fork reversal (RFR). RuvA specifically binds to HJ cruciform DNA, conferring on it an open structure. The RuvB hexamer acts as an ATP-dependent pump, pulling dsDNA into and through the RuvAB complex. HJ branch migration allows RuvC to scan DNA until it finds its consensus sequence, where it cleaves and resolves the cruciform DNA. The sequence is that of Holliday junction branch migration complex subunit RuvA from Elusimicrobium minutum (strain Pei191).